Consider the following 69-residue polypeptide: Large ribosomal subunit protein bL32c (69 aa).

It belongs to the bacterial ribosomal protein bL32 family.

The protein resides in the plastid. Its subcellular location is the chloroplast. In Marchantia polymorpha (Common liverwort), this protein is Large ribosomal subunit protein bL32c (rpl32).